The chain runs to 160 residues: Oocyte-secreted protein 4B (160 aa).

Positions 1 to 13 (MKTSVLLAITAMC) are cleaved as a signal peptide.

Belongs to the PLAC1 family.

It localises to the secreted. This Homo sapiens (Human) protein is Oocyte-secreted protein 4B.